Reading from the N-terminus, the 356-residue chain is Chavicol O-methyltransferase (356 aa).

G202, D225, D245, M246, and K259 together coordinate S-adenosyl-L-methionine. H263 acts as the Proton acceptor in catalysis.

The protein belongs to the class I-like SAM-binding methyltransferase superfamily. Cation-independent O-methyltransferase family. COMT subfamily. As to quaternary structure, homodimer. As to expression, specifically expressed in the peltate glandular trichomes on the surface of the young basil leaves.

It catalyses the reaction (E)-isoeugenol + S-adenosyl-L-methionine = (E)-isomethyleugenol + S-adenosyl-L-homocysteine + H(+). Its pathway is aromatic compound metabolism; phenylpropanoid biosynthesis. Phenylpropene O-methyltransferase that catalyzes the methylation of the para-4-hydroxyl of chavicol to methylchavicol. Can also convert eugenol to methyleugenol but with less affinity. This is Chavicol O-methyltransferase (CVOMT1) from Ocimum basilicum (Sweet basil).